Reading from the N-terminus, the 99-residue chain is Mitochondrial import receptor subunit TOM9-2 (99 aa).

The Cytoplasmic segment spans residues 2–51; it reads AAKRIGAGKSGGGDPNILARISNSEIVSQGRRAAGDAVEVSKKLLRSTGK. A helical membrane pass occupies residues 52-69; sequence AAWIAGTTFLILVVPLII. Residues 70–99 lie on the Mitochondrial intermembrane side of the membrane; that stretch reads EMDREAQINEIELQQASLLGAPPSPMQRGL.

The protein belongs to the Tom22 family. Forms part of the preprotein translocase complex of the outer mitochondrial membrane (TOM complex) which consists of at least 6 different proteins (TOM5, TOM6, TOM7, TOM20, TOM22/TOM9 and TOM40). In terms of tissue distribution, expressed in young cotyledons, roots, flowers and leaves.

The protein resides in the mitochondrion outer membrane. In terms of biological role, central component of the receptor complex responsible for the recognition and translocation of cytosolically synthesized mitochondrial preproteins. Together with TOM20 functions as the transit peptide receptor at the surface of the mitochondrion outer membrane and facilitates the movement of preproteins into the translocation pore. The sequence is that of Mitochondrial import receptor subunit TOM9-2 (TOM9-2) from Arabidopsis thaliana (Mouse-ear cress).